The sequence spans 286 residues: MRLIIVSGRSGSGKSTALNVLEDNGFYCIDNLPASLLPDLAQRALLHTELLQPQVAVSIDARNLPSQLQRFPELLQEVRDNHINCDVLYLDADDETLLKRFSETRRRHPLTTDTRSLAEAIGDESQLLGPIADLADLKLDTTSLNLYQLRDTIKLRLLNKPEPGTAFLVESFGFKRGMPVDADLVFDVRCLPNPYWKPELRDHSGLEPEVREYLAAQPDVEEMYQDIVGYLNKWLPRFAASNRSYVTVAIGCTGGHHRSVYLAERIGAALRDSLKNVQIRHRDLSS.

An ATP-binding site is contributed by 8 to 15 (GRSGSGKS). 60–63 (DARN) provides a ligand contact to GTP.

Belongs to the RapZ-like family.

Functionally, displays ATPase and GTPase activities. The polypeptide is Nucleotide-binding protein PLES_48441 (Pseudomonas aeruginosa (strain LESB58)).